Consider the following 388-residue polypeptide: Spermosin (388 aa).

The N-terminal stretch at Met-1–Cys-22 is a signal peptide. The segment covering Phe-29–Thr-49 has biased composition (polar residues). The segment at Phe-29–Glu-98 is disordered. The span at Gln-54 to Tyr-64 shows a compositional bias: pro residues. Intrachain disulfides connect Cys-116/Cys-251, Cys-163/Cys-179, Cys-265/Cys-330, Cys-295/Cys-310, and Cys-320/Cys-349. Residues Ile-130 to Pro-372 form the Peptidase S1 domain. Catalysis depends on charge relay system residues His-178 and Asp-231. The Charge relay system role is filled by Ser-324.

It belongs to the peptidase S1 family. As to quaternary structure, heterodimer of a heavy chain and either an L1 light chain or an L2 light chain linked by a disulfide bond. Detected in sperm, but not in unfertilized eggs (at protein level). Expressed in gonad, but not in hepatopancreas, intestine or branchial basket.

It is found in the secreted. It catalyses the reaction Hydrolyzes arginyl bonds, preferably with Pro in the P2 position.. Inhibited by peptidyl-argininals with Pro in the P2 position, diisopropyl fluorophosphate, phenylmethanesulfonyl fluoride, leupeptin, antipain, soybean trypsin inhibitor, aprotinin, ovomucoid, valyl-prolyl-arginyl-chloromethane, glycyl-valyl-arginyl-chloromethane, p-aminobenzamidine, benzamidine, zinc chloride and mercuric chloride. Its function is as follows. Trypsin-like protease with a narrow substrate specificity. Preferentially hydrolyzes substrates with Pro in the P2 position and Val in the P3 position. Plays a role in fertilization. In Halocynthia roretzi (Sea squirt), this protein is Spermosin.